A 639-amino-acid polypeptide reads, in one-letter code: Tetracycline resistance protein TetW (639 aa).

A tr-type G domain is found at Met-1–Glu-243. Residues Ala-10–Thr-17, Asp-74–His-78, and Asn-128–Asp-131 each bind GTP.

It belongs to the TRAFAC class translation factor GTPase superfamily. Classic translation factor GTPase family. TetM/TetO subfamily.

Abolishes the inhibitory effect of tetracyclin on protein synthesis by a non-covalent modification of the ribosomes. The chain is Tetracycline resistance protein TetW (tetW) from Butyrivibrio fibrisolvens.